Consider the following 207-residue polypeptide: Tereporin-Ts1 (207 aa).

A signal peptide spans valine 1–serine 11. Positions serine 35–arginine 54 are N-terminal region. The phosphocholine site is built by glycine 111, serine 129, proline 131, tyrosine 164, and tyrosine 165.

The protein belongs to the actinoporin family. Conoidea subfamily. Octamer or nonamer in membranes. Monomer in the soluble state. Expressed by the venom duct.

It localises to the secreted. It is found in the nematocyst. The protein localises to the target cell membrane. Its function is as follows. Pore-forming protein that forms pores of around 1 nm and causes cardiac stimulation and cytolysis. This Terebra subulata (Chocolate spotted auger) protein is Tereporin-Ts1.